The chain runs to 197 residues: Adenylyl-sulfate kinase (197 aa).

33–40 (GLSGSGKS) contributes to the ATP binding site. Ser107 functions as the Phosphoserine intermediate in the catalytic mechanism.

The protein belongs to the APS kinase family.

The enzyme catalyses adenosine 5'-phosphosulfate + ATP = 3'-phosphoadenylyl sulfate + ADP + H(+). Its pathway is sulfur metabolism; hydrogen sulfide biosynthesis; sulfite from sulfate: step 2/3. Its function is as follows. Catalyzes the synthesis of activated sulfate. In Bacillus pumilus (strain SAFR-032), this protein is Adenylyl-sulfate kinase.